The primary structure comprises 65 residues: Large ribosomal subunit protein bL35 (65 aa).

Belongs to the bacterial ribosomal protein bL35 family.

The chain is Large ribosomal subunit protein bL35 from Edwardsiella ictaluri (strain 93-146).